The chain runs to 420 residues: Pyrin and HIN domain-containing protein 1 (420 aa).

In terms of domain architecture, Pyrin spans 1–87; the sequence is MVNEYKRIVL…ANKLKNEKAK (87 aa). Disordered stretches follow at residues 82-201 and 216-236; these read KNEK…SSSA and RLKN…GSKK. Positions 87-102 are enriched in basic residues; it reads KAKRTRTGKRKTAAKR. Composition is skewed to polar residues over residues 108-118 and 126-151; these read PSTSQPMSTTN and GRST…AIQI. Low complexity predominate over residues 152-169; that stretch reads SPTIASSSGQTSSRSSET. The span at 170–201 shows a compositional bias: polar residues; that stretch reads LQSIIQSPKTPKRPSSSILDPPVSSGTASSSA. Residues 219 to 416 form the HIN-200 domain; sequence NVPKEPSEEN…STTHSNMQVI (198 aa). Residues 220–229 show a composition bias toward basic and acidic residues; that stretch reads VPKEPSEENG.

The protein belongs to the HIN-200 family.

It localises to the nucleus. This Mus musculus (Mouse) protein is Pyrin and HIN domain-containing protein 1.